A 494-amino-acid chain; its full sequence is Catalase isozyme 2 (494 aa).

The interval 1-29 is disordered; it reads MDPCKFRPSSSFDTKTTTTNAGQPVWNDN. Polar residues predominate over residues 8-22; sequence PSSSFDTKTTTTNAG. Residues histidine 65 and asparagine 138 contribute to the active site. Tyrosine 348 contributes to the heme binding site.

This sequence belongs to the catalase family. As to quaternary structure, homotetramer. Requires heme as cofactor.

The protein resides in the peroxisome. The protein localises to the glyoxysome. It carries out the reaction 2 H2O2 = O2 + 2 H2O. Its function is as follows. Occurs in almost all aerobically respiring organisms and serves to protect cells from the toxic effects of hydrogen peroxide. The chain is Catalase isozyme 2 (CAT2) from Hordeum vulgare (Barley).